We begin with the raw amino-acid sequence, 205 residues long: SCO2-like protein RC0895 (205 aa).

Positions 82, 86, and 172 each coordinate Cu cation.

It belongs to the SCO1/2 family.

The protein is SCO2-like protein RC0895 of Rickettsia conorii (strain ATCC VR-613 / Malish 7).